The following is a 239-amino-acid chain: Purine nucleoside phosphorylase DeoD-type (239 aa).

His5 serves as a coordination point for a purine D-ribonucleoside. Residues Gly21, Arg25, Arg44, and 88-91 (RVGS) contribute to the phosphate site. Residues 180–182 (EME) and 204–205 (SD) each bind a purine D-ribonucleoside. Asp205 serves as the catalytic Proton donor.

The protein belongs to the PNP/UDP phosphorylase family. Homohexamer; trimer of homodimers.

The enzyme catalyses a purine D-ribonucleoside + phosphate = a purine nucleobase + alpha-D-ribose 1-phosphate. The catalysed reaction is a purine 2'-deoxy-D-ribonucleoside + phosphate = a purine nucleobase + 2-deoxy-alpha-D-ribose 1-phosphate. Its function is as follows. Catalyzes the reversible phosphorolytic breakdown of the N-glycosidic bond in the beta-(deoxy)ribonucleoside molecules, with the formation of the corresponding free purine bases and pentose-1-phosphate. The sequence is that of Purine nucleoside phosphorylase DeoD-type from Cronobacter sakazakii (strain ATCC BAA-894) (Enterobacter sakazakii).